A 677-amino-acid polypeptide reads, in one-letter code: UvrABC system protein B (677 aa).

The Helicase ATP-binding domain maps to 31-417; the sequence is DRIESGETDI…SDGVVEQIIR (387 aa). Residue 44 to 51 participates in ATP binding; sequence GATGTGKS. A Beta-hairpin motif is present at residues 97 to 120; that stretch reads YYDYYQPEAYVPKTDTFIEKDASV. The 163-residue stretch at 434-596 folds into the Helicase C-terminal domain; sequence QIDDLLEEIR…VTPVPIKKTV (163 aa). The region spanning 629 to 664 is the UVR domain; it reads KSHIKSLEAKMYMAAESLMFEEAAELRDEIQSLKEK.

It belongs to the UvrB family. In terms of assembly, forms a heterotetramer with UvrA during the search for lesions. Interacts with UvrC in an incision complex.

It is found in the cytoplasm. Functionally, the UvrABC repair system catalyzes the recognition and processing of DNA lesions. A damage recognition complex composed of 2 UvrA and 2 UvrB subunits scans DNA for abnormalities. Upon binding of the UvrA(2)B(2) complex to a putative damaged site, the DNA wraps around one UvrB monomer. DNA wrap is dependent on ATP binding by UvrB and probably causes local melting of the DNA helix, facilitating insertion of UvrB beta-hairpin between the DNA strands. Then UvrB probes one DNA strand for the presence of a lesion. If a lesion is found the UvrA subunits dissociate and the UvrB-DNA preincision complex is formed. This complex is subsequently bound by UvrC and the second UvrB is released. If no lesion is found, the DNA wraps around the other UvrB subunit that will check the other stand for damage. The protein is UvrABC system protein B of Tropheryma whipplei (strain TW08/27) (Whipple's bacillus).